Reading from the N-terminus, the 24-residue chain is Brevinin-1Pe (24 aa).

Residues cysteine 18 and cysteine 24 are joined by a disulfide bond.

As to expression, expressed by the skin glands.

The protein localises to the secreted. Antibacterial activity against Gram-positive bacterium S.aureus and Gram-negative bacterium E.coli. Has activity against C.albicans. The polypeptide is Brevinin-1Pe (Lithobates pipiens (Northern leopard frog)).